Reading from the N-terminus, the 422-residue chain is Bifunctional enzyme IspD/IspF (422 aa).

The 2-C-methyl-D-erythritol 4-phosphate cytidylyltransferase stretch occupies residues 1–267 (MAVGLLLLAA…PISALSMPLP (267 aa)). The tract at residues 268–422 (LIGVGIDFHK…AIAVAQIYHR (155 aa)) is 2-C-methyl-D-erythritol 2,4-cyclodiphosphate synthase. Residues Asp-274 and His-276 each contribute to the a divalent metal cation site. 4-CDP-2-C-methyl-D-erythritol 2-phosphate contacts are provided by residues 274 to 276 (DFH) and 301 to 302 (HS). An a divalent metal cation-binding site is contributed by His-309. Residues 323–325 (DIG), Phe-404, and Arg-407 each bind 4-CDP-2-C-methyl-D-erythritol 2-phosphate.

The protein in the N-terminal section; belongs to the IspD/TarI cytidylyltransferase family. IspD subfamily. It in the C-terminal section; belongs to the IspF family. Requires a divalent metal cation as cofactor.

The enzyme catalyses 2-C-methyl-D-erythritol 4-phosphate + CTP + H(+) = 4-CDP-2-C-methyl-D-erythritol + diphosphate. The catalysed reaction is 4-CDP-2-C-methyl-D-erythritol 2-phosphate = 2-C-methyl-D-erythritol 2,4-cyclic diphosphate + CMP. The protein operates within isoprenoid biosynthesis; isopentenyl diphosphate biosynthesis via DXP pathway; isopentenyl diphosphate from 1-deoxy-D-xylulose 5-phosphate: step 2/6. It functions in the pathway isoprenoid biosynthesis; isopentenyl diphosphate biosynthesis via DXP pathway; isopentenyl diphosphate from 1-deoxy-D-xylulose 5-phosphate: step 4/6. In terms of biological role, bifunctional enzyme that catalyzes the formation of 4-diphosphocytidyl-2-C-methyl-D-erythritol from CTP and 2-C-methyl-D-erythritol 4-phosphate (MEP) (IspD), and catalyzes the conversion of 4-diphosphocytidyl-2-C-methyl-D-erythritol 2-phosphate (CDP-ME2P) to 2-C-methyl-D-erythritol 2,4-cyclodiphosphate (ME-CPP) with a corresponding release of cytidine 5-monophosphate (CMP) (IspF). In Tropheryma whipplei (strain TW08/27) (Whipple's bacillus), this protein is Bifunctional enzyme IspD/IspF.